The primary structure comprises 584 residues: 2-isopropylmalate synthase (584 aa).

The Pyruvate carboxyltransferase domain maps to 45-323; the sequence is PRWLSTDLRD…SPNLDFSKLD (279 aa). 4 residues coordinate a divalent metal cation: Asp54, His262, His264, and Asn298.

Belongs to the alpha-IPM synthase/homocitrate synthase family. LeuA type 2 subfamily. In terms of assembly, homodimer. A divalent metal cation serves as cofactor.

The catalysed reaction is 3-methyl-2-oxobutanoate + acetyl-CoA + H2O = (2S)-2-isopropylmalate + CoA + H(+). The protein operates within amino-acid biosynthesis; L-leucine biosynthesis; L-leucine from 3-methyl-2-oxobutanoate: step 1/4. In terms of biological role, catalyzes the condensation of the acetyl group of acetyl-CoA with 3-methyl-2-oxobutanoate (2-oxoisovalerate) to form 3-carboxy-3-hydroxy-4-methylpentanoate (2-isopropylmalate). This chain is 2-isopropylmalate synthase (leu3), found in Schizosaccharomyces pombe (strain 972 / ATCC 24843) (Fission yeast).